We begin with the raw amino-acid sequence, 414 residues long: Methanesulfonate monooxygenase hydroxylase subunit alpha (414 aa).

A Rieske domain is found at 44 to 163 (WVPFRHESEL…CEVKFGGFVW (120 aa)). The [2Fe-2S] cluster site is built by Cys-86, His-88, Cys-115, and His-118. His-225 lines the Fe cation pocket.

The protein belongs to the bacterial ring-hydroxylating dioxygenase alpha subunit family. The MSA monooxygenase system consists of 4 proteins: the 2 subunits of the hydroxylase component (MsmA and MsmB), a ferredoxin (MsmC) and a ferredoxin reductase (MsmD). The hydroxylase component consists of a 3 alpha (MsmA) and 3 beta (MsmB) subunits. It depends on [2Fe-2S] cluster as a cofactor. Fe cation serves as cofactor.

It localises to the cytoplasm. The catalysed reaction is methanesulfonate + NADH + O2 = sulfite + formaldehyde + NAD(+) + H2O. With respect to regulation, MSAMO is inhibited by metal chelators (such as bathophenanthroline, bathocuprione, neocuprione, alpha-alpha-dipyridil and sodium EDTA) and by sodium azide, sodium arsenate and potassium cyanide. Its function is as follows. Methanesulfonate monooxygenase (MSAMO) mediates the primary degradation of methanesulfonic acid (MSA) to produce formaldehyd and inorganic sulfite by initial hydroxylation of the carbon atom prior to spontaneous cleavage of the unstable hydroxymethanesulfonic acid. MSAMO has a restricted substrate range that includes only the short-chain aliphatic sulfonates (methane- to butanesulfonate) and excludes all larger molecules, such as arylsulfonates and aromatic sulfonates. All MSAMO components are required for enzyme activity. This chain is Methanesulfonate monooxygenase hydroxylase subunit alpha, found in Methylosulfonomonas methylovora.